The primary structure comprises 504 residues: MVLADLGRKITSALRSLSNATIINEEVLNAMLKEVCTALLEADVNIKLVKQLRENVKSAIDLEEMASGLNKRKMIQHAVFKELVKLVDPGVKAWTPTKGKQNVIMFVGLQGSGKTTTCSKLAYYYQRKGWKTCLICADTFRAGAFDQLKQNATKARIPFYGSYTEMDPVIIASEGVEKFKNENFEIIIVDTSGRHKQEDSLFEEMLQVANAIQPDNIVYVMDASIGQACEAQAKAFKDKVDVASVIVTKLDGHAKGGGALSAVAATKSPIIFIGTGEHIDDFEPFKTQPFISKLLGMGDIEGLIDKVNELKLDDNEALIEKLKHGQFTLRDMYEQFQNIMKMGPFSQILGMIPGFGTDFMSKGNEQESMARLKKLMTIMDSMNDQELDSTDGAKVFSKQPGRIQRVARGSGVSTRDVQELLTQYTKFAQMVKKMGGIKGLFKGGDMSKNVSQSQMAKLNQQMAKMMDPRVLHHMGGMAGLQSMMRQFQQGAAGNMKGMMGFNNM.

The segment at 1-295 is NG domain; it reads MVLADLGRKI…KTQPFISKLL (295 aa). GTP is bound by residues 108–115, 190–194, and 248–251; these read GLQGSGKT, DTSGR, and TKLD. The M-domain stretch occupies residues 296–504; it reads GMGDIEGLID…MKGMMGFNNM (209 aa).

Belongs to the GTP-binding SRP family. SRP54 subfamily. In terms of assembly, component of a signal recognition particle (SRP) complex that consists of a 7SL RNA molecule of 300 nucleotides and six protein subunits: SRP72, SRP68, SRP54, SRP19, SRP14 and SRP9. Interacts with RNPS1. Interacts with the SRP receptor subunit SRPRA.

Its subcellular location is the nucleus speckle. The protein resides in the cytoplasm. The protein localises to the endoplasmic reticulum. It catalyses the reaction GTP + H2O = GDP + phosphate + H(+). Its function is as follows. Component of the signal recognition particle (SRP) complex, a ribonucleoprotein complex that mediates the cotranslational targeting of secretory and membrane proteins to the endoplasmic reticulum (ER). As part of the SRP complex, associates with the SRP receptor (SR) component SRPRA to target secretory proteins to the endoplasmic reticulum membrane. Binds to the signal sequence of presecretory proteins when they emerge from the ribosomes. Displays basal GTPase activity, and stimulates reciprocal GTPase activation of the SR subunit SRPRA. Forms a guanosine 5'-triphosphate (GTP)-dependent complex with the SR subunit SRPRA. SR compaction and GTPase mediated rearrangement of SR drive SRP-mediated cotranslational protein translocation into the ER. Requires the presence of SRP9/SRP14 and/or SRP19 to stably interact with RNA. Plays a role in proliferation and differentiation of granulocytic cells, neutrophils migration capacity and exocrine pancreas development. This chain is Signal recognition particle subunit SRP54, found in Homo sapiens (Human).